A 542-amino-acid polypeptide reads, in one-letter code: Global nitrogen regulator NrpR (542 aa).

The segment at 12-77 (IEILDILSKS…VITERGLEEL (66 aa)) is winged helix-turn-helix. 2 NRD regions span residues 85–320 (RLGS…KANI) and 321–542 (RIKT…YKEI).

Belongs to the NrpR family. Homodimer.

Its activity is regulated as follows. Under nitrogen limitation, binding of the intracellular nitrogen metabolite 2-oxoglutarate to NrpR decreases the binding affinity of NrpR to DNA, leading to initiation of transcription. Functionally, transcriptional repressor of nitrogen fixation and assimilation genes. Binds to two tandem operators in the glnA and nif promoters, thereby blocking transcription of the genes. This is Global nitrogen regulator NrpR from Methanocaldococcus jannaschii (strain ATCC 43067 / DSM 2661 / JAL-1 / JCM 10045 / NBRC 100440) (Methanococcus jannaschii).